A 243-amino-acid chain; its full sequence is Ribonuclease PH (243 aa).

Phosphate-binding positions include Arg91 and 129-131 (GTR).

The protein belongs to the RNase PH family. Homohexameric ring arranged as a trimer of dimers.

It carries out the reaction tRNA(n+1) + phosphate = tRNA(n) + a ribonucleoside 5'-diphosphate. In terms of biological role, phosphorolytic 3'-5' exoribonuclease that plays an important role in tRNA 3'-end maturation. Removes nucleotide residues following the 3'-CCA terminus of tRNAs; can also add nucleotides to the ends of RNA molecules by using nucleoside diphosphates as substrates, but this may not be physiologically important. Probably plays a role in initiation of 16S rRNA degradation (leading to ribosome degradation) during starvation. This is Ribonuclease PH from Burkholderia lata (strain ATCC 17760 / DSM 23089 / LMG 22485 / NCIMB 9086 / R18194 / 383).